The following is a 449-amino-acid chain: Nucleoporin NUP42 (449 aa).

A C3H1-type zinc finger spans residues 1 to 25 (MAICSFFLQGRCRYGEKCWNEHPRG). Disordered regions lie at residues 22–84 (HPRG…GFDN) and 218–237 (DMTS…SSFP). Polar residues-rich tracts occupy residues 47-83 (WGSS…SGFD) and 218-227 (DMTSGYNGQQ). 7 FG repeats span residues 231-232 (FG), 274-275 (FG), 284-285 (FG), 305-306 (FG), 314-315 (FG), 335-336 (FG), and 347-348 (FG).

As to quaternary structure, probable component of the nuclear pore complex (NPC).

The protein resides in the nucleus. It is found in the nuclear pore complex. The protein localises to the nucleus membrane. Its function is as follows. Required for the export of mRNAs containing poly(A) tails from the nucleus into the cytoplasm. The sequence is that of Nucleoporin NUP42 (nup42) from Xenopus tropicalis (Western clawed frog).